The chain runs to 215 residues: Protein C' (215 aa).

The disordered stretch occupies residues 12–34 (MPSFLKKILKLRGRRQEDESRSR). An involved in self-degradation and in host STAT1 degradation region spans residues 15–22 (FLKKILKL). The segment covering 25 to 35 (RRQEDESRSRM) has biased composition (basic and acidic residues). Positions 36–66 (LSDSSTQSYQVNQLTSEGTEAGSTIPSTPSK) are enriched in polar residues.

This sequence belongs to the respirovirus protein C family. In terms of assembly, the different isoforms interact (via C-terminus) with unphosphorylated and phosphorylated human STAT1 (via N-terminus), favoring the formation of parallel STAT1 homodimers. The different isoforms do not interact with host STAT2. C protein interacts with L protein; this interaction has an inhibitory effect on viral transcription and replication. Protein Y1 is produced not only by alternative initiation, but also by proteolytic cleavage of C'. Only alternative initiation is detected in vitro, whereas in vivo cleavage seems to be predominant.

The protein localises to the host cytoplasm. Functionally, the different products prevent the establishment of cellular antiviral state by blocking the interferon-alpha/beta (IFN-alpha/beta) and IFN-gamma signaling pathways. They inhibit IFN-alpha/beta induced tyrosine phosphorylation of STAT1 and STAT2. Blocking the IFN-alpha/beta pathway requires binding to STAT1 in the cytoplasm. They inhibit IFN-gamma induced serine phosphorylation of STAT1. Block the IFN-gamma pathway by binding to and stabilizing the parallel form of the STAT1 dimer, further inducing high-molecular-weight complex formation and inhibition of transcription by IFN-gamma. May also have a role in preventing the cell to enter apoptosis. Modulate regulation of viral transcription and replication. Overexpression inhibits the viral RNA polymerase. The absence of all C', C and Y1 proteins leads to viral delayed growth. Plays an important role in virion particles release. Modulates virion shape. The chain is Protein C' (P/V/C) from Sendai virus (strain Ohita) (SeV).